Here is an 808-residue protein sequence, read N- to C-terminus: Dynamin-related protein 3A (808 aa).

The disordered stretch occupies residues 1–31 (MTIEEVSGETPPSTPPSSSTPSPSSSTTNAA). Positions 16–28 (PSSSTPSPSSSTT) are enriched in low complexity. The 275-residue stretch at 56-330 (TIALPQVVVV…LVQHIKVLLP (275 aa)) folds into the Dynamin-type G domain. A G1 motif region spans residues 66 to 73 (GSQSSGKS). Position 66–73 (66–73 (GSQSSGKS)) interacts with GTP. Positions 92-94 (CTR) are G2 motif. Positions 172–175 (DLPG) are G3 motif. Residues 172-176 (DLPGI) and 241-244 (TKLD) contribute to the GTP site. A G4 motif region spans residues 241 to 244 (TKLD). The segment at 271–274 (VNRC) is G5 motif. Positions 548 to 578 (IPHPVARPKDTVEPDRTSSSTSQVKSRSFLG) are disordered. Residues 554–563 (RPKDTVEPDR) are compositionally biased toward basic and acidic residues. The span at 564–575 (TSSSTSQVKSRS) shows a compositional bias: low complexity. A GED domain is found at 670–761 (IQITKLLLRS…TLDELPLEAD (92 aa)). The interval 774-808 (LTSSKYSTSSSYSASPSTTRRSRRAGDQHQNGYGF) is disordered. The segment covering 775–792 (TSSKYSTSSSYSASPSTT) has biased composition (low complexity).

This sequence belongs to the TRAFAC class dynamin-like GTPase superfamily. Dynamin/Fzo/YdjA family. Homooligomer. Interacts with ARC5 on peroxisomes and ELM1 on mitochondria. Ubiquitous. Preferentially expressed in flowers.

It is found in the mitochondrion. The protein localises to the peroxisome. Functionally, involved in the control of mitochondrial and peroxisomal division and morphology. In association with PEX11C, PEX11D, PEX11E and FIS1B, is involved in cell cycle-associated constitutive self-replication of preexisting peroxisomes. The sequence is that of Dynamin-related protein 3A (DRP3A) from Arabidopsis thaliana (Mouse-ear cress).